A 387-amino-acid polypeptide reads, in one-letter code: Formate-dependent phosphoribosylglycinamide formyltransferase (387 aa).

N(1)-(5-phospho-beta-D-ribosyl)glycinamide contacts are provided by residues 21 to 22 (EL) and glutamate 81. Residues arginine 113, lysine 154, 159-164 (SSGHGQ), 193-196 (EEFI), and glutamate 201 each bind ATP. The ATP-grasp domain occupies 118-306 (TFAAEEVGVK…EFALHLRAVL (189 aa)). Mg(2+)-binding residues include glutamate 265 and glutamate 277. N(1)-(5-phospho-beta-D-ribosyl)glycinamide-binding positions include aspartate 284, lysine 352, and 359-360 (RR).

It belongs to the PurK/PurT family. Homodimer.

It carries out the reaction N(1)-(5-phospho-beta-D-ribosyl)glycinamide + formate + ATP = N(2)-formyl-N(1)-(5-phospho-beta-D-ribosyl)glycinamide + ADP + phosphate + H(+). Its pathway is purine metabolism; IMP biosynthesis via de novo pathway; N(2)-formyl-N(1)-(5-phospho-D-ribosyl)glycinamide from N(1)-(5-phospho-D-ribosyl)glycinamide (formate route): step 1/1. Functionally, involved in the de novo purine biosynthesis. Catalyzes the transfer of formate to 5-phospho-ribosyl-glycinamide (GAR), producing 5-phospho-ribosyl-N-formylglycinamide (FGAR). Formate is provided by PurU via hydrolysis of 10-formyl-tetrahydrofolate. This is Formate-dependent phosphoribosylglycinamide formyltransferase from Wolinella succinogenes (strain ATCC 29543 / DSM 1740 / CCUG 13145 / JCM 31913 / LMG 7466 / NCTC 11488 / FDC 602W) (Vibrio succinogenes).